Reading from the N-terminus, the 358-residue chain is Vascular endothelial growth factor D (358 aa).

The first 21 residues, 1–21 (MYGEWGMGNILMMFHVYLVQG), serve as a signal peptide directing secretion. The propeptide occupies 22 to 93 (FRSEHGPVKD…SRSASHRSTR (72 aa)). Intrachain disulfides connect cysteine 116-cysteine 158, cysteine 147-cysteine 194, and cysteine 151-cysteine 196. Residues asparagine 160 and asparagine 190 are each glycosylated (N-linked (GlcNAc...) asparagine). Positions 211–358 (SIQTPEEDEC…AQGLYSQENP (148 aa)) are excised as a propeptide. The stretch at 227–242 (CPIDMLWDNTKCKCVL) is one 1; approximate repeat. The tract at residues 227–323 (CPIDMLWDNT…PDTCSCEDRC (97 aa)) is 4 X 16 AA repeats of C-X(10)-C-X-C-X(1,3)-C. 3 tandem repeats follow at residues 263–278 (CGPHMTFDEDRCECVC), 282–298 (CPGDLIQHPENCSCFEC), and 306–323 (CQKHKIFHPDTCSCEDRC). A glycan (N-linked (GlcNAc...) asparagine) is linked at asparagine 292.

The protein belongs to the PDGF/VEGF growth factor family. As to quaternary structure, homodimer; non-covalent and antiparallel. Post-translationally, undergoes a complex proteolytic maturation which generates a variety of processed secreted forms with increased activity toward VEGFR-3 and VEGFR-2. VEGF-D first form an antiparallel homodimer linked by disulfide bonds before secretion. The fully processed VEGF-D is composed mostly of two VEGF homology domains (VHDs) bound by non-covalent interactions. As to expression, highly expressed in fetal and adult lung.

The protein localises to the secreted. Its function is as follows. Growth factor active in angiogenesis, lymphangiogenesis and endothelial cell growth, stimulating their proliferation and migration and also has effects on the permeability of blood vessels. May function in the formation of the venous and lymphatic vascular systems during embryogenesis, and also in the maintenance of differentiated lymphatic endothelium in adults. Binds and activates VEGFR-3 (Flt4) receptor. This is Vascular endothelial growth factor D from Mus musculus (Mouse).